A 463-amino-acid chain; its full sequence is Xanthine permease XanP (463 aa).

12 helical membrane passes run 43–63, 71–91, 93–113, 126–146, 156–176, 192–212, 222–242, 260–280, 352–372, 379–399, 409–429, and 439–459; these read LLAM…ALGL, IISM…KAWG, VGSG…PLIM, PTMM…EMVI, IITP…LIQV, TFGA…IILL, VASL…MGML, LYYG…VFMI, GFVV…SGFV, VLGG…VRIV, ILII…PLIL, and LLSS…LIFP.

The protein belongs to the nucleobase:cation symporter-2 (NCS2) (TC 2.A.40) family.

It localises to the cell inner membrane. It catalyses the reaction xanthine(in) + H(+)(in) = xanthine(out) + H(+)(out). Functionally, specific, proton motive force-dependent high-affinity transporter for xanthine. In Escherichia coli O6:H1 (strain CFT073 / ATCC 700928 / UPEC), this protein is Xanthine permease XanP (xanP).